Consider the following 390-residue polypeptide: Heme chaperone HemW (390 aa).

Residues 15 to 254 form the Radical SAM core domain; sequence PMPGQPFGVY…DARLSAAGFA (240 aa). Tyrosine 24 serves as a coordination point for S-adenosyl-L-methionine. The [4Fe-4S] cluster site is built by cysteine 30, cysteine 34, and cysteine 37. S-adenosyl-L-methionine is bound by residues glycine 82, 83–84, glutamate 115, glutamine 142, arginine 154, and aspartate 179; that span reads GT.

This sequence belongs to the anaerobic coproporphyrinogen-III oxidase family. HemW subfamily. [4Fe-4S] cluster is required as a cofactor.

The protein localises to the cytoplasm. Its function is as follows. Probably acts as a heme chaperone, transferring heme to an unknown acceptor. Binds one molecule of heme per monomer, possibly covalently. Binds 1 [4Fe-4S] cluster. The cluster is coordinated with 3 cysteines and an exchangeable S-adenosyl-L-methionine. This chain is Heme chaperone HemW, found in Mycobacterium tuberculosis (strain CDC 1551 / Oshkosh).